The primary structure comprises 341 residues: GTP 3',8-cyclase (341 aa).

Residues 17–235 (TYGRVATDLR…LRTRFELTAE (219 aa)) form the Radical SAM core domain. A GTP-binding site is contributed by arginine 26. [4Fe-4S] cluster-binding residues include cysteine 33 and cysteine 37. Tyrosine 39 contributes to the S-adenosyl-L-methionine binding site. A [4Fe-4S] cluster-binding site is contributed by cysteine 40. Residue arginine 77 coordinates GTP. Position 81 (glycine 81) interacts with S-adenosyl-L-methionine. Threonine 108 is a binding site for GTP. Residue serine 132 coordinates S-adenosyl-L-methionine. Residue lysine 169 coordinates GTP. Methionine 203 lines the S-adenosyl-L-methionine pocket. [4Fe-4S] cluster contacts are provided by cysteine 268 and cysteine 271. 273–275 (RTR) contacts GTP. Position 285 (cysteine 285) interacts with [4Fe-4S] cluster.

The protein belongs to the radical SAM superfamily. MoaA family. As to quaternary structure, monomer and homodimer. [4Fe-4S] cluster serves as cofactor.

It catalyses the reaction GTP + AH2 + S-adenosyl-L-methionine = (8S)-3',8-cyclo-7,8-dihydroguanosine 5'-triphosphate + 5'-deoxyadenosine + L-methionine + A + H(+). It participates in cofactor biosynthesis; molybdopterin biosynthesis. In terms of biological role, catalyzes the cyclization of GTP to (8S)-3',8-cyclo-7,8-dihydroguanosine 5'-triphosphate. In Streptomyces coelicolor (strain ATCC BAA-471 / A3(2) / M145), this protein is GTP 3',8-cyclase.